A 234-amino-acid chain; its full sequence is MWSSIAAFPVLVPVALACLGYEGGVPTPTAHHSNSAVIEVAAGQVFDAGWAKYDRGSGACKGQSEGDWKDAVFYLHSGATLKNVIIGANQAEGVHCDGPCTLQFVWFEDVCEDAITIKNDKAGQETWIIGGGAYHASDKIVQHNGCGTVNIINFYAEDYGKVPRSCGNCDKQCKRNVYVEGTTARNGGEVVGINLNYGDTATLKNVCADSAHPCVFYDGCAGDCEPKKVGYCSG.

An N-terminal signal peptide occupies residues 1–17 (MWSSIAAFPVLVPVALA).

The protein belongs to the polysaccharide lyase 3 family. Ca(2+) is required as a cofactor.

It localises to the secreted. It carries out the reaction Eliminative cleavage of (1-&gt;4)-alpha-D-galacturonan to give oligosaccharides with 4-deoxy-alpha-D-galact-4-enuronosyl groups at their non-reducing ends.. In terms of biological role, pectinolytic enzyme consist of four classes of enzymes: pectin lyase, polygalacturonase, pectin methylesterase and rhamnogalacturonase. Among pectinolytic enzymes, pectin lyase is the most important in depolymerization of pectin, since it cleaves internal glycosidic bonds of highly methylated pectins. Favors pectate, the anion, over pectin, the methyl ester. This Aspergillus fumigatus (strain ATCC MYA-4609 / CBS 101355 / FGSC A1100 / Af293) (Neosartorya fumigata) protein is Probable pectate lyase F (plyF).